The primary structure comprises 338 residues: Ketol-acid reductoisomerase (NADP(+)) (338 aa).

The KARI N-terminal Rossmann domain occupies 1-181 (MKIYYDKDCN…GGGRAGIIET (181 aa)). NADP(+)-binding positions include 24 to 27 (YGSQ), arginine 47, serine 50, serine 52, and 82 to 85 (DETQ). Histidine 107 is an active-site residue. Residue glycine 133 coordinates NADP(+). Residues 182 to 327 (SFKEETETDL…ARLRSMMSWI (146 aa)) form the KARI C-terminal knotted domain. Positions 190, 194, 226, and 230 each coordinate Mg(2+). Serine 251 contributes to the substrate binding site.

This sequence belongs to the ketol-acid reductoisomerase family. It depends on Mg(2+) as a cofactor.

It carries out the reaction (2R)-2,3-dihydroxy-3-methylbutanoate + NADP(+) = (2S)-2-acetolactate + NADPH + H(+). The enzyme catalyses (2R,3R)-2,3-dihydroxy-3-methylpentanoate + NADP(+) = (S)-2-ethyl-2-hydroxy-3-oxobutanoate + NADPH + H(+). It functions in the pathway amino-acid biosynthesis; L-isoleucine biosynthesis; L-isoleucine from 2-oxobutanoate: step 2/4. Its pathway is amino-acid biosynthesis; L-valine biosynthesis; L-valine from pyruvate: step 2/4. Functionally, involved in the biosynthesis of branched-chain amino acids (BCAA). Catalyzes an alkyl-migration followed by a ketol-acid reduction of (S)-2-acetolactate (S2AL) to yield (R)-2,3-dihydroxy-isovalerate. In the isomerase reaction, S2AL is rearranged via a Mg-dependent methyl migration to produce 3-hydroxy-3-methyl-2-ketobutyrate (HMKB). In the reductase reaction, this 2-ketoacid undergoes a metal-dependent reduction by NADPH to yield (R)-2,3-dihydroxy-isovalerate. This Geobacter metallireducens (strain ATCC 53774 / DSM 7210 / GS-15) protein is Ketol-acid reductoisomerase (NADP(+)).